The primary structure comprises 233 residues: PEP2-like protein NECHADRAFT_97050 (233 aa).

Belongs to the PEP2 family.

In terms of biological role, may contribute to the ability of the fungus to cause disease on pea plants. This is PEP2-like protein NECHADRAFT_97050 from Fusarium vanettenii (strain ATCC MYA-4622 / CBS 123669 / FGSC 9596 / NRRL 45880 / 77-13-4) (Fusarium solani subsp. pisi).